Consider the following 274-residue polypeptide: Protein YehF (274 aa).

The WGR domain occupies 2 to 78 (RHFIYQDEKS…KDNSLQPSQT (77 aa)).

Its function is as follows. Has been implicated in selenate reduction; a mini-Tn10 insertion mutant in 'molR', (which was mapped to 47.3 centisomes i.e. this locus), is defective in the reduction of selenate. This is Protein YehF (yehF) from Escherichia coli (strain K12).